A 408-amino-acid polypeptide reads, in one-letter code: Inhibin beta B chain (408 aa).

The first 28 residues, 1 to 28 (MDGLPGRALGAACLLMLAVGSLGPGVWG), serve as a signal peptide directing secretion. The tract at residues 29 to 60 (SPTPPPLPAAPQPPPPPPGAPGGSQDTCTSCG) is disordered. Positions 29-293 (SPTPPPLPAA…GDSRHRIRKR (265 aa)) are excised as a propeptide. The span at 30-48 (PTPPPLPAAPQPPPPPPGA) shows a compositional bias: pro residues. N-linked (GlcNAc...) asparagine glycosylation occurs at asparagine 94. 4 cysteine pairs are disulfide-bonded: cysteine 297–cysteine 305, cysteine 304–cysteine 373, cysteine 333–cysteine 405, and cysteine 337–cysteine 407.

It belongs to the TGF-beta family. Dimeric, linked by one or more disulfide bonds. Inhibin B is a dimer of alpha and beta-B. Activin B is a homodimer of beta-B. Activin AB is a dimer of beta-A and beta-B. Interacts with FST and FSTL3.

The protein localises to the secreted. Inhibins and activins inhibit and activate, respectively, the secretion of follitropin by the pituitary gland. Inhibins/activins are involved in regulating a number of diverse functions such as hypothalamic and pituitary hormone secretion, gonadal hormone secretion, germ cell development and maturation, erythroid differentiation, insulin secretion, nerve cell survival, embryonic axial development or bone growth, depending on their subunit composition. Inhibins appear to oppose the functions of activins. In terms of biological role, activin B is a dimer of alpha and beta-B that plays a role in several essential biological processes including embryonic development, stem cell maintenance and differentiation, haematopoiesis, cell proliferation and wound healing. Signals through type I receptor ACVR1C, abundantly expressed in pancreatic beta cells, and type II receptors like ACVR2A. Upon ligand binding, these receptors phosphorylate intracellular signaling mediators SMAD2 and SMAD3, which form a complex with SMAD4, translocate to the nucleus, and regulate gene expression. Plays a crucial role in the induction of hepcidin by inflammation through activation of ACVR1C and subsequent phosphorylation of SMAD1/5/8. Regulates adipocyte lipid metabolism by decreasing non-esterified fatty acids and glycerol release and increases intracellular triglyceride content. Stimulates wound healing by promoting cell migration and hair follicle regeneration through the JNK and ERK signaling pathways downstream of RHOA. Functionally, inhibin B is a dimer of alpha and beta-B that plays a crucial role in the regulation of the reproductive system by inhibiting the secretion of follicle-stimulating hormone (FSH) from the anterior pituitary gland. Thereby, maintains reproductive homeostasis in both males and females. Acts as a more potent suppressor of FSH release than inhibin A. Functions as competitive receptor antagonist binding activin type II receptors with high affinity in the presence of the TGF-beta type III coreceptor/TGFBR3L. The polypeptide is Inhibin beta B chain (INHBB) (Bos taurus (Bovine)).